We begin with the raw amino-acid sequence, 182 residues long: uncharacterized protein (182 aa).

Residues 1–177 form the Macro domain; sequence MEFSVGGVEV…KFLEVFKKHL (177 aa).

This is an uncharacterized protein from Pyrobaculum aerophilum (strain ATCC 51768 / DSM 7523 / JCM 9630 / CIP 104966 / NBRC 100827 / IM2).